Consider the following 193-residue polypeptide: 3-isopropylmalate dehydratase small subunit (193 aa).

Belongs to the LeuD family. LeuD type 1 subfamily. In terms of assembly, heterodimer of LeuC and LeuD.

The catalysed reaction is (2R,3S)-3-isopropylmalate = (2S)-2-isopropylmalate. It participates in amino-acid biosynthesis; L-leucine biosynthesis; L-leucine from 3-methyl-2-oxobutanoate: step 2/4. Catalyzes the isomerization between 2-isopropylmalate and 3-isopropylmalate, via the formation of 2-isopropylmaleate. In Bacillus anthracis (strain CDC 684 / NRRL 3495), this protein is 3-isopropylmalate dehydratase small subunit.